An 87-amino-acid polypeptide reads, in one-letter code: Small ribosomal subunit protein uS15 (87 aa).

Belongs to the universal ribosomal protein uS15 family. Part of the 30S ribosomal subunit. Forms a bridge to the 50S subunit in the 70S ribosome, contacting the 23S rRNA.

One of the primary rRNA binding proteins, it binds directly to 16S rRNA where it helps nucleate assembly of the platform of the 30S subunit by binding and bridging several RNA helices of the 16S rRNA. Functionally, forms an intersubunit bridge (bridge B4) with the 23S rRNA of the 50S subunit in the ribosome. In Clostridium perfringens (strain ATCC 13124 / DSM 756 / JCM 1290 / NCIMB 6125 / NCTC 8237 / Type A), this protein is Small ribosomal subunit protein uS15.